The chain runs to 425 residues: Enolase (425 aa).

Q163 contributes to the (2R)-2-phosphoglycerate binding site. E205 functions as the Proton donor in the catalytic mechanism. 3 residues coordinate Mg(2+): D242, E286, and D313. Positions 338, 367, 368, and 389 each coordinate (2R)-2-phosphoglycerate. The active-site Proton acceptor is the K338.

It belongs to the enolase family. The cofactor is Mg(2+).

The protein localises to the cytoplasm. The protein resides in the secreted. It is found in the cell surface. It carries out the reaction (2R)-2-phosphoglycerate = phosphoenolpyruvate + H2O. It functions in the pathway carbohydrate degradation; glycolysis; pyruvate from D-glyceraldehyde 3-phosphate: step 4/5. Its function is as follows. Catalyzes the reversible conversion of 2-phosphoglycerate (2-PG) into phosphoenolpyruvate (PEP). It is essential for the degradation of carbohydrates via glycolysis. The chain is Enolase from Lactobacillus delbrueckii subsp. bulgaricus (strain ATCC 11842 / DSM 20081 / BCRC 10696 / JCM 1002 / NBRC 13953 / NCIMB 11778 / NCTC 12712 / WDCM 00102 / Lb 14).